We begin with the raw amino-acid sequence, 1085 residues long: Ubiquitin carboxyl-terminal hydrolase 36 (1085 aa).

The span at 23 to 36 (GGNSSAAGSSADQA) shows a compositional bias: low complexity. 2 disordered regions span residues 23–47 (GGNSSAAGSSADQAKSGEESNGSLQ) and 104–149 (KVVG…PKPK). The USP domain occupies 173–481 (TGMINVGNTC…NAYIMFYELD (309 aa)). Catalysis depends on Cys-182, which acts as the Nucleophile. His-440 acts as the Proton acceptor in catalysis. Disordered regions lie at residues 489–730 (AANR…NNSK), 745–888 (KSAD…ELLK), 963–1030 (EQRQ…FYNQ), and 1043–1085 (KFNR…QQQS). Over residues 503–518 (STTPVPATTVSSPSPT) the composition is skewed to low complexity. Phosphoserine is present on residues Ser-514 and Ser-516. A compositionally biased stretch (polar residues) spans 532–542 (GYSNGNAQKTA). The segment covering 588-609 (NGNKSSSTSSNNSSSSNHKSIN) has biased composition (low complexity). A compositionally biased stretch (basic and acidic residues) spans 642–651 (MTDDHTEKPK). Residues Thr-660 and Thr-664 each carry the phosphothreonine modification. Phosphoserine occurs at positions 674 and 676. A compositionally biased stretch (polar residues) spans 705 to 730 (TNGHSKTNGSLTNGSASSSVHVNNSK). Residue Ser-749 is modified to Phosphoserine. Acidic residues predominate over residues 749 to 758 (SDDDDDEEES). The segment covering 768–778 (PQKQSQSQSKA) has biased composition (low complexity). A compositionally biased stretch (pro residues) spans 779–788 (PPSPKTPPSP). Phosphoserine is present on Ser-781. Thr-784 carries the phosphothreonine modification. Residue Ser-787 is modified to Phosphoserine. Positions 805–818 (EVDDIDDDDDEEEE) are enriched in acidic residues. The span at 822–844 (KIQTPSKTHRNPFSSSKPSTDSP) shows a compositional bias: polar residues. Thr-825 carries the post-translational modification Phosphothreonine. At Ser-843 the chain carries Phosphoserine. The residue at position 846 (Thr-846) is a Phosphothreonine. Polar residues predominate over residues 859–884 (PVKSHQQPRVGNGYQSEATSNGSTIN). Composition is skewed to low complexity over residues 987–998 (SGSAKGNNASNS) and 1056–1066 (QQQRALQRHLA).

This sequence belongs to the peptidase C19 family. Interacts with atms/PAF1, but not with CycT.

It localises to the nucleus. Its subcellular location is the nucleolus. The catalysed reaction is Thiol-dependent hydrolysis of ester, thioester, amide, peptide and isopeptide bonds formed by the C-terminal Gly of ubiquitin (a 76-residue protein attached to proteins as an intracellular targeting signal).. Required for maintaining multiple types of adult stem cells, including male and female germline, epithelial follicle cell and intestinal stem cells. May function as a transcriptional repressor by continually deubiquiting histone H2B at the promoters of genes critical for cellular differentiation, thereby preventing histone H3 'Lys-4' trimethylation (H3K4). Controls selective autophagy activation by ubiquitinated proteins. In Drosophila erecta (Fruit fly), this protein is Ubiquitin carboxyl-terminal hydrolase 36 (Usp36).